A 641-amino-acid polypeptide reads, in one-letter code: ATP-dependent DNA helicase PIF1 (641 aa).

The interval M1 to A180 is PINT. Phosphoserine occurs at positions 27 and 151. A hydrolyzes ATP in the presence of both magnesium and single-stranded DNA; weak activity in the presence of RNA or double-stranded DNA; No unwinding activity region spans residues P167–L641. Residues K173 to P192 are disordered. Residue G228–S235 participates in ATP binding. Residues Q577–F596 mediate DNA binding. Residues L622–L641 form a disordered region. Positions S624–L641 are enriched in acidic residues.

The protein belongs to the helicase family. PIF1 subfamily. Monomer. Interacts with telomerase. It depends on Mg(2+) as a cofactor. As to expression, weak ubiquitous expression.

It localises to the nucleus. Its subcellular location is the mitochondrion. It catalyses the reaction Couples ATP hydrolysis with the unwinding of duplex DNA at the replication fork by translocating in the 5'-3' direction. This creates two antiparallel DNA single strands (ssDNA). The leading ssDNA polymer is the template for DNA polymerase III holoenzyme which synthesizes a continuous strand.. The enzyme catalyses ATP + H2O = ADP + phosphate + H(+). Its function is as follows. DNA-dependent ATPase and 5'-3' DNA helicase required for the maintenance of both mitochondrial and nuclear genome stability. Efficiently unwinds G-quadruplex (G4) DNA structures and forked RNA-DNA hybrids. Resolves G4 structures, preventing replication pausing and double-strand breaks (DSBs) at G4 motifs. Involved in the maintenance of telomeric DNA. Inhibits telomere elongation, de novo telomere formation and telomere addition to DSBs via catalytic inhibition of telomerase. Reduces the processivity of telomerase by displacing active telomerase from DNA ends. Releases telomerase by unwinding the short telomerase RNA/telomeric DNA hybrid that is the intermediate in the telomerase reaction. Possesses an intrinsic strand annealing activity. In Homo sapiens (Human), this protein is ATP-dependent DNA helicase PIF1.